We begin with the raw amino-acid sequence, 128 residues long: UPF0325 protein YaeH (128 aa).

Belongs to the UPF0325 family.

The sequence is that of UPF0325 protein YaeH from Escherichia fergusonii (strain ATCC 35469 / DSM 13698 / CCUG 18766 / IAM 14443 / JCM 21226 / LMG 7866 / NBRC 102419 / NCTC 12128 / CDC 0568-73).